The sequence spans 179 residues: Large ribosomal subunit protein uL5 (179 aa).

Belongs to the universal ribosomal protein uL5 family. In terms of assembly, part of the 50S ribosomal subunit; part of the 5S rRNA/L5/L18/L25 subcomplex. Contacts the 5S rRNA and the P site tRNA. Forms a bridge to the 30S subunit in the 70S ribosome.

Its function is as follows. This is one of the proteins that bind and probably mediate the attachment of the 5S RNA into the large ribosomal subunit, where it forms part of the central protuberance. In the 70S ribosome it contacts protein S13 of the 30S subunit (bridge B1b), connecting the 2 subunits; this bridge is implicated in subunit movement. Contacts the P site tRNA; the 5S rRNA and some of its associated proteins might help stabilize positioning of ribosome-bound tRNAs. The polypeptide is Large ribosomal subunit protein uL5 (Agathobacter rectalis (strain ATCC 33656 / DSM 3377 / JCM 17463 / KCTC 5835 / VPI 0990) (Eubacterium rectale)).